The primary structure comprises 337 residues: Phenylalanine--tRNA ligase alpha subunit (337 aa).

Mg(2+) is bound at residue glutamate 258.

The protein belongs to the class-II aminoacyl-tRNA synthetase family. Phe-tRNA synthetase alpha subunit type 1 subfamily. As to quaternary structure, tetramer of two alpha and two beta subunits. Requires Mg(2+) as cofactor.

The protein resides in the cytoplasm. It catalyses the reaction tRNA(Phe) + L-phenylalanine + ATP = L-phenylalanyl-tRNA(Phe) + AMP + diphosphate + H(+). The protein is Phenylalanine--tRNA ligase alpha subunit of Burkholderia thailandensis (strain ATCC 700388 / DSM 13276 / CCUG 48851 / CIP 106301 / E264).